We begin with the raw amino-acid sequence, 507 residues long: CWF19-like protein DRN1 (507 aa).

A Phosphoserine modification is found at Ser242.

This sequence belongs to the CWF19 family. As to quaternary structure, interacts with DBR1. Interacts with SYF1, a component of the NTC complex. Interacts with lariat-introns and lariat-intermediates.

It is found in the nucleus. Its subcellular location is the cytoplasm. Involved in branched RNA metabolism, modulating the turnover of lariat-intron pre-mRNAs by the lariat-debranching enzyme DBR1. Enhances the debranching activity of DBR1 in vitro. The polypeptide is CWF19-like protein DRN1 (DRN1) (Saccharomyces cerevisiae (strain ATCC 204508 / S288c) (Baker's yeast)).